A 108-amino-acid polypeptide reads, in one-letter code: Replication restart protein PriB (108 aa).

Residues 8–108 (VDNRFSLIGK…LHAEQIEFIE (101 aa)) form the SSB domain.

The protein belongs to the PriB family. In terms of assembly, homodimer. Interacts with PriA and DnaT. Component of the replication restart primosome. Primosome assembly occurs via a 'hand-off' mechanism. PriA binds to replication forks, subsequently PriB then DnaT bind; DnaT then displaces ssDNA to generate the helicase loading substrate.

Involved in the restart of stalled replication forks, which reloads the replicative helicase on sites other than the origin of replication; the PriA-PriB pathway is the major replication restart pathway. During primosome assembly it facilitates complex formation between PriA and DnaT on DNA; stabilizes PriA on DNA. Stimulates the DNA unwinding activity of PriA helicase. The polypeptide is Replication restart protein PriB (Histophilus somni (strain 2336) (Haemophilus somnus)).